Reading from the N-terminus, the 137-residue chain is MNVKIIVEFIKKFAEENNCKKIAEIGIGFKFDVARELSKYFDLIAIDINEKAIEKAKLLGLNAYKDDLFNPNISLYKNIDLIYSIRPPRDLQPYILDLSKKVNANLIIRPLLNEMPIKELKLKNYKGEVFYIKEKQI.

This sequence belongs to the UPF0146 family.

This Methanocaldococcus jannaschii (strain ATCC 43067 / DSM 2661 / JAL-1 / JCM 10045 / NBRC 100440) (Methanococcus jannaschii) protein is UPF0146 protein MJ0688.